A 661-amino-acid polypeptide reads, in one-letter code: UvrABC system protein B (661 aa).

The Helicase ATP-binding domain occupies 25-182 (AGLSSKKRSQ…NDLINLQYER (158 aa)). 38–45 (GITGSGKT) contacts ATP. The Beta-hairpin motif lies at 91 to 114 (YYDYYQPEAYIARTDTFIEKDSSI). Residues 430–592 (QIEDLISEIQ…IIPKTINRTI (163 aa)) form the Helicase C-terminal domain. In terms of domain architecture, UVR spans 621–656 (KTHIDKLKKEMLKAASNLEFEQAAKLRDQLKTLEEA).

The protein belongs to the UvrB family. Forms a heterotetramer with UvrA during the search for lesions. Interacts with UvrC in an incision complex.

It localises to the cytoplasm. The UvrABC repair system catalyzes the recognition and processing of DNA lesions. A damage recognition complex composed of 2 UvrA and 2 UvrB subunits scans DNA for abnormalities. Upon binding of the UvrA(2)B(2) complex to a putative damaged site, the DNA wraps around one UvrB monomer. DNA wrap is dependent on ATP binding by UvrB and probably causes local melting of the DNA helix, facilitating insertion of UvrB beta-hairpin between the DNA strands. Then UvrB probes one DNA strand for the presence of a lesion. If a lesion is found the UvrA subunits dissociate and the UvrB-DNA preincision complex is formed. This complex is subsequently bound by UvrC and the second UvrB is released. If no lesion is found, the DNA wraps around the other UvrB subunit that will check the other stand for damage. The chain is UvrABC system protein B from Rickettsia massiliae (strain Mtu5).